Here is a 42-residue protein sequence, read N- to C-terminus: Thymosin beta-10 (42 aa).

Composition is skewed to basic and acidic residues over residues 1-25 and 33-42; these read MADKPDMGEINSFDKAKLKKTETQE and ETIEQEKQAK. The segment at 1–42 is disordered; the sequence is MADKPDMGEINSFDKAKLKKTETQEKNTLPTKETIEQEKQAK. N-acetylalanine is present on Ala2. At Lys4 the chain carries N6-acetyllysine. Ser12 is subject to Phosphoserine. Lys15 carries the N6-acetyllysine modification. Residues Thr21, Thr23, and Thr34 each carry the phosphothreonine modification. At Lys39 the chain carries N6-acetyllysine.

This sequence belongs to the thymosin beta family.

Its subcellular location is the cytoplasm. It is found in the cytoskeleton. In terms of biological role, plays an important role in the organization of the cytoskeleton. Binds to and sequesters actin monomers (G actin) and therefore inhibits actin polymerization. The polypeptide is Thymosin beta-10 (TMSB10) (Sus scrofa (Pig)).